The chain runs to 815 residues: Probable E3 ubiquitin-protein ligase hulA (815 aa).

One can recognise a C2 domain in the interval 1–112 (MGSNLPSQPN…EMGGDEMLTR (112 aa)). 2 disordered regions span residues 134-237 (NLST…GWER) and 253-353 (RTTT…YFVD). Composition is skewed to low complexity over residues 165–185 (ASAA…SNPS) and 202–212 (APGAAAGATPT). Composition is skewed to polar residues over residues 213 to 226 (NTQG…SFED) and 253 to 270 (RTTT…QTQR). The WW 1 domain maps to 229–262 (GRLPAGWERREDNLGRTYYVDHNTRTTTWTRPSS). Positions 279–294 (LERRAHQSRMLPEDRT) are enriched in basic and acidic residues. Polar residues predominate over residues 295 to 308 (GANSPNLPETSQQA). Residues 324–333 (ATGATTAGTG) show a composition bias toward low complexity. WW domains are found at residues 333-366 (GELP…DPRR) and 393-426 (GPLP…DPRL). The HECT domain occupies 482–815 (SASDLKKRLM…VEETLGFGQE (334 aa)). The active-site Glycyl thioester intermediate is the C783.

This sequence belongs to the RSP5/NEDD4 family. Interacts with creD.

It is found in the cytoplasm. It catalyses the reaction S-ubiquitinyl-[E2 ubiquitin-conjugating enzyme]-L-cysteine + [acceptor protein]-L-lysine = [E2 ubiquitin-conjugating enzyme]-L-cysteine + N(6)-ubiquitinyl-[acceptor protein]-L-lysine.. It functions in the pathway protein modification; protein ubiquitination. In terms of biological role, E3 ubiquitin-protein ligase which accepts ubiquitin from an E2 ubiquitin-conjugating enzyme in the form of a thioester and then directly transfers the ubiquitin to targeted substrates. Probably involved in the regulatory network controlling carbon source utilization. The protein is Probable E3 ubiquitin-protein ligase hulA (hulA) of Aspergillus clavatus (strain ATCC 1007 / CBS 513.65 / DSM 816 / NCTC 3887 / NRRL 1 / QM 1276 / 107).